The primary structure comprises 339 residues: Tetraacyldisaccharide 4'-kinase (339 aa).

62 to 69 (VAGGTGKT) provides a ligand contact to ATP.

The protein belongs to the LpxK family.

The enzyme catalyses a lipid A disaccharide + ATP = a lipid IVA + ADP + H(+). Its pathway is glycolipid biosynthesis; lipid IV(A) biosynthesis; lipid IV(A) from (3R)-3-hydroxytetradecanoyl-[acyl-carrier-protein] and UDP-N-acetyl-alpha-D-glucosamine: step 6/6. Its function is as follows. Transfers the gamma-phosphate of ATP to the 4'-position of a tetraacyldisaccharide 1-phosphate intermediate (termed DS-1-P) to form tetraacyldisaccharide 1,4'-bis-phosphate (lipid IVA). The protein is Tetraacyldisaccharide 4'-kinase of Xylella fastidiosa (strain 9a5c).